An 835-amino-acid chain; its full sequence is Protein VP3 (835 aa).

The N7-methyltransferase activity stretch occupies residues arginine 171 to lysine 245. The interval tryptophan 246 to glycine 428 is 2'-O-methyltransferase activity. Residues valine 429–aspartate 555 form an N7-methyltransferase activity region. Residues lysine 556–threonine 692 form a GTase/RTPase activity region. The 2'-5'-phosphodiesterase activity stretch occupies residues tyrosine 693–glutamate 835. Catalysis depends on for 2'-5'-phosphodiesterase activity residues histidine 718, threonine 720, histidine 797, and threonine 799.

The protein belongs to the rotavirus VP3 family. Interacts with VP1. Interacts with VP2.

It is found in the virion. It carries out the reaction a 5'-end diphospho-ribonucleoside in mRNA + GTP + H(+) = a 5'-end (5'-triphosphoguanosine)-ribonucleoside in mRNA + diphosphate. The catalysed reaction is a 5'-end (5'-triphosphoguanosine)-ribonucleoside in mRNA + S-adenosyl-L-methionine = a 5'-end (N(7)-methyl 5'-triphosphoguanosine)-ribonucleoside in mRNA + S-adenosyl-L-homocysteine. It catalyses the reaction 5'-triphosphoadenylyl-(2'-&gt;5')-adenylyl-(2'-&gt;5')-adenosine + 2 H2O = 2 AMP + ATP + 2 H(+). Functionally, multifunctional enzyme involved in mRNA capping. Catalyzes the formation of the 5' cap structure on the viral plus-strand transcripts. Specifically binds to GTP and displays guanylyltransferase and methyltransferase activities. Has affinity for ssRNA but not for dsRNA. Capping activity is non-specific and caps RNAs that initiate with either a G or an A residue. Together with VP1 polymerase, forms a VP1-VP3 complex positioned near the channels situated at each of the five-fold vertices of the core. Following infection, the outermost layer of the virus is lost, leaving a double-layered particle (DLP) made up of the core and VP6 shell. VP1 then catalyzes the transcription of fully conservative plus-strand genomic RNAs that are capped by VP3 and extruded through the DLP's channels into the cytoplasm where they function as mRNAs for translation of viral proteins. DLPs probably have an RNA triphosphatase activity as well, whereas open cores do not. Counteracts the host innate immune response thanks to its phosphodiesterase that degrades the 5'-triphosphorylated, 2'-5' linked adenylate oligomers produced by the host cell IFN-inducible 2',5'-oligoadenylate synthetase (OAS). The host RNaseL is therefore not activated. The chain is Protein VP3 from Homo sapiens (Human).